A 365-amino-acid chain; its full sequence is Peptide chain release factor 2 (365 aa).

Position 252 is an N5-methylglutamine (Gln252).

Belongs to the prokaryotic/mitochondrial release factor family. Post-translationally, methylated by PrmC. Methylation increases the termination efficiency of RF2.

It localises to the cytoplasm. Its function is as follows. Peptide chain release factor 2 directs the termination of translation in response to the peptide chain termination codons UGA and UAA. This Escherichia coli (strain K12 / MC4100 / BW2952) protein is Peptide chain release factor 2.